Consider the following 114-residue polypeptide: Nucleoid-associated protein CKL_3826 (114 aa).

Belongs to the YbaB/EbfC family. Homodimer.

Its subcellular location is the cytoplasm. The protein localises to the nucleoid. Functionally, binds to DNA and alters its conformation. May be involved in regulation of gene expression, nucleoid organization and DNA protection. The protein is Nucleoid-associated protein CKL_3826 of Clostridium kluyveri (strain ATCC 8527 / DSM 555 / NBRC 12016 / NCIMB 10680 / K1).